Consider the following 445-residue polypeptide: UNC93-like protein MFSD11 (445 aa).

The chain crosses the membrane as a helical span at residues 8–28; the sequence is LLNIVILGVGFMFMFTAFQTS. Asn-40 is a glycosylation site (N-linked (GlcNAc...) asparagine). Helical transmembrane passes span 52 to 72, 74 to 94, 98 to 118, and 138 to 158; these read LAIIYSVFSASNLIAPSVIAV, GCQMSMFLSGLLYSAYIAMFI, TWSFYTLSVLIGIAAAVLWTA, and IFWALLQFSMLFGNLYIYLAW. N-linked (GlcNAc...) asparagine glycosylation is present at Asn-163. The next 7 helical transmembrane spans lie at 170–190, 239–259, 277–297, 309–329, 343–363, 385–405, and 415–435; these read RTVFIALTVISLVGSVLFFLI, MLLLSILVAYTGLELTFYSGV, LIGLSGIFVGLGEVLGGGLFG, PVVILGVVVHFLAFYMIYLYM, LSAFINPSKTLALACSFLLGL, APAFAVFKFVQSVSAAVAFFY, and LLILVIFGFFGTISFFFVEWG.

Belongs to the unc-93 family.

The protein resides in the membrane. This Xenopus laevis (African clawed frog) protein is UNC93-like protein MFSD11 (mfsd11).